Here is a 319-residue protein sequence, read N- to C-terminus: MSRNEEQYLNLARRILETGASKMDRTKTGTHSIFGAQMRFDLSEGFPLLTSKKVAFGRIKSELLWFLRGDNNIRFLLQHHNHIWDEWPFKKWVESNEYKGPDMTDFGLRTQKDPIFAEQYKEQKKIFVDRILNDDEFSKKFGTIGDVYGKLWRHWPDANDDGSVDQITRLINEIKVNPNSRRLILTAWDPETTPFATLPSCHVMSQFYVVDGKISLQMYQRSADYFLGVPFNIASYSLLLSMVAAQTGLEVGEFIHTIGDAHIYNNHVDQIKEQLSKPTHKLPTLKLNPDVKSIFDYEMSDIKLENYIHEDVIKAPIAV.

DUMP contacts are provided by residues Arg25 and 181-182; that span reads RR. The Nucleophile role is filled by Cys201. DUMP contacts are provided by residues 221–224, Asn232, and 262–264; these read RSAD and HIY. Residue Asp224 coordinates (6R)-5,10-methylene-5,6,7,8-tetrahydrofolate. Ala318 is a (6R)-5,10-methylene-5,6,7,8-tetrahydrofolate binding site.

Belongs to the thymidylate synthase family. Bacterial-type ThyA subfamily. In terms of assembly, homodimer.

The protein localises to the cytoplasm. It catalyses the reaction dUMP + (6R)-5,10-methylene-5,6,7,8-tetrahydrofolate = 7,8-dihydrofolate + dTMP. The protein operates within pyrimidine metabolism; dTTP biosynthesis. In terms of biological role, catalyzes the reductive methylation of 2'-deoxyuridine-5'-monophosphate (dUMP) to 2'-deoxythymidine-5'-monophosphate (dTMP) while utilizing 5,10-methylenetetrahydrofolate (mTHF) as the methyl donor and reductant in the reaction, yielding dihydrofolate (DHF) as a by-product. This enzymatic reaction provides an intracellular de novo source of dTMP, an essential precursor for DNA biosynthesis. The sequence is that of Thymidylate synthase from Oenococcus oeni (strain ATCC BAA-331 / PSU-1).